A 355-amino-acid polypeptide reads, in one-letter code: Protein RecA (355 aa).

67–74 contacts ATP; sequence GPESSGKT. Positions 336–355 are disordered; sequence NSAASDYEDNENEEMNNEEF. A compositionally biased stretch (acidic residues) spans 341–355; that stretch reads DYEDNENEEMNNEEF.

It belongs to the RecA family.

The protein resides in the cytoplasm. Its function is as follows. Can catalyze the hydrolysis of ATP in the presence of single-stranded DNA, the ATP-dependent uptake of single-stranded DNA by duplex DNA, and the ATP-dependent hybridization of homologous single-stranded DNAs. It interacts with LexA causing its activation and leading to its autocatalytic cleavage. The sequence is that of Protein RecA from Photorhabdus laumondii subsp. laumondii (strain DSM 15139 / CIP 105565 / TT01) (Photorhabdus luminescens subsp. laumondii).